Here is a 559-residue protein sequence, read N- to C-terminus: Protochlorophyllide-dependent translocon component 52, chloroplastic (559 aa).

The transit peptide at 1–55 (MEAALAACALPSLRILNTKPRFRCSFSNPSLPISPNSLITRKSSRFTTAVSSPPS) directs the protein to the chloroplast. A disordered region spans residues 44–70 (SRFTTAVSSPPSSSAATSTNSPPEPEA). Residues 47 to 64 (TTAVSSPPSSSAATSTNS) show a composition bias toward low complexity. Positions 85–195 (WYPVMPICDL…STVQHEIIWF (111 aa)) constitute a Rieske domain. Positions 127, 129, 147, and 150 each coordinate [2Fe-2S] cluster. 2 residues coordinate Fe cation: H248 and H253. The Redox-active motif motif lies at 483–486 (CSSC). 2 consecutive transmembrane segments (helical) span residues 493–513 (LNAL…VMAV) and 525–545 (IAVL…SHFI).

It depends on [2Fe-2S] cluster as a cofactor.

Its subcellular location is the plastid. It is found in the chloroplast inner membrane. The enzyme catalyses protochlorophyllide a + 4 reduced [2Fe-2S]-[ferredoxin] + 2 O2 + 5 H(+) = protochlorophyllide b + 4 oxidized [2Fe-2S]-[ferredoxin] + 3 H2O. With respect to regulation, down-regulated by light. Functionally, part of a translocon most abundantly expressed in etiolated plants and involved in the protochlorophyllide-dependent import of the precursor NADPH:protochlorophyllide oxidoreductase A (pPORA). This is Protochlorophyllide-dependent translocon component 52, chloroplastic from Arabidopsis thaliana (Mouse-ear cress).